Consider the following 160-residue polypeptide: 2-C-methyl-D-erythritol 2,4-cyclodiphosphate synthase (160 aa).

The a divalent metal cation site is built by D12 and H14. 4-CDP-2-C-methyl-D-erythritol 2-phosphate-binding positions include 12 to 14 (DVH) and 38 to 39 (HS). A divalent metal cation is bound at residue H46. Residues 60 to 62 (DIG), 65 to 69 (FPDTD), 136 to 139 (TTTE), F143, and R146 contribute to the 4-CDP-2-C-methyl-D-erythritol 2-phosphate site.

The protein belongs to the IspF family. As to quaternary structure, homotrimer. A divalent metal cation is required as a cofactor.

The enzyme catalyses 4-CDP-2-C-methyl-D-erythritol 2-phosphate = 2-C-methyl-D-erythritol 2,4-cyclic diphosphate + CMP. The protein operates within isoprenoid biosynthesis; isopentenyl diphosphate biosynthesis via DXP pathway; isopentenyl diphosphate from 1-deoxy-D-xylulose 5-phosphate: step 4/6. Involved in the biosynthesis of isopentenyl diphosphate (IPP) and dimethylallyl diphosphate (DMAPP), two major building blocks of isoprenoid compounds. Catalyzes the conversion of 4-diphosphocytidyl-2-C-methyl-D-erythritol 2-phosphate (CDP-ME2P) to 2-C-methyl-D-erythritol 2,4-cyclodiphosphate (ME-CPP) with a corresponding release of cytidine 5-monophosphate (CMP). The sequence is that of 2-C-methyl-D-erythritol 2,4-cyclodiphosphate synthase from Acinetobacter baumannii (strain AB307-0294).